We begin with the raw amino-acid sequence, 305 residues long: DNA-directed RNA polymerase 35 kDa subunit (305 aa).

The protein belongs to the poxviridae DNA-directed RNA polymerase 35 kDa subunit family. As to quaternary structure, the DNA-dependent RNA polymerase used for intermediate and late genes expression consists of eight subunits 147 kDa, 133 kDa, 35 kDa, 30 kDa, 22 kDa, 19 kDa, 18 kDa and 7 kDa totalling more than 500 kDa in mass. The same holoenzyme, with the addition of the transcription-specificity factor RAP94, is used for early gene expression.

It localises to the virion. The enzyme catalyses RNA(n) + a ribonucleoside 5'-triphosphate = RNA(n+1) + diphosphate. Functionally, part of the DNA-dependent RNA polymerase which catalyzes the transcription of viral DNA into RNA using the four ribonucleoside triphosphates as substrates. Responsible for the transcription of early, intermediate and late genes. DNA-dependent RNA polymerase associates with the early transcription factor (ETF), itself composed of D6 and A7, thereby allowing the early genes transcription. Late transcription, and probably also intermediate transcription, require newly synthesized RNA polymerase. The protein is DNA-directed RNA polymerase 35 kDa subunit (OPG156) of Homo sapiens (Human).